Here is a 496-residue protein sequence, read N- to C-terminus: Probable fatty acyl-CoA reductase 5 (496 aa).

This sequence belongs to the fatty acyl-CoA reductase family. In terms of tissue distribution, expressed in the endodermal cell layer surrounding the central vasculature in roots. Expressed in floral organs of very young unopened buds and receptacle of siliques.

The catalysed reaction is a long-chain fatty acyl-CoA + 2 NADPH + 2 H(+) = a long-chain primary fatty alcohol + 2 NADP(+) + CoA. Functionally, catalyzes the reduction of fatty acyl-CoA to fatty alcohols. Catalyzes specifically the formation of C18:0 fatty alcohol. Provides the fatty alcohols required for synthesis of suberin in roots, seed coat and wound-induced leaf tissue. Provides the fatty alcohols required for synthesis of alkyl hydroxycinnamates in root waxes. This Arabidopsis thaliana (Mouse-ear cress) protein is Probable fatty acyl-CoA reductase 5.